The chain runs to 294 residues: Nucleotide-binding protein A2cp1_0165 (294 aa).

17 to 24 (GVSGSGKS) is a binding site for ATP. 68 to 71 (DARE) provides a ligand contact to GTP.

This sequence belongs to the RapZ-like family.

In terms of biological role, displays ATPase and GTPase activities. The sequence is that of Nucleotide-binding protein A2cp1_0165 from Anaeromyxobacter dehalogenans (strain 2CP-1 / ATCC BAA-258).